A 410-amino-acid polypeptide reads, in one-letter code: Porin-like protein GalP (410 aa).

An N-terminal signal peptide occupies residues 1–25 (MKCRTLYPLVPTFALAASLPLQALA).

The protein belongs to the outer membrane porin (Opr) (TC 1.B.25) family.

Functionally, probable transporter, possibly involved in the gallate degradation pathway. May play a role in the uptake of low gallate concentrations that may exist in the natural habitats of P.putida. This chain is Porin-like protein GalP (galP), found in Pseudomonas putida (strain ATCC 47054 / DSM 6125 / CFBP 8728 / NCIMB 11950 / KT2440).